A 37-amino-acid chain; its full sequence is Calcitonin gene-related peptide 1 (37 aa).

A disulfide bond links cysteine 2 and cysteine 7. A Phenylalanine amide modification is found at phenylalanine 37.

It belongs to the calcitonin family.

The protein resides in the secreted. Functionally, CGRP1/CALCA is a peptide hormone that induces vasodilation mediated by the CALCRL-RAMP1 receptor complex. Dilates a variety of vessels including the coronary, cerebral and systemic vasculature. Its abundance in the CNS also points toward a neurotransmitter or neuromodulator role. It also elevates platelet cAMP. CGRP1 can also bind and activate CALCR-RAMP1 (AMYR1) receptor complex. In Ovis aries (Sheep), this protein is Calcitonin gene-related peptide 1 (CALCA).